A 331-amino-acid polypeptide reads, in one-letter code: tRNA N6-adenosine threonylcarbamoyltransferase (331 aa).

3 residues coordinate Fe cation: His-109, His-113, and Tyr-130. Residues 130–134, Asp-162, Asp-183, and Ser-262 each bind substrate; that span reads YLSGG. Residue Asp-290 participates in Fe cation binding.

It belongs to the KAE1 / TsaD family. It depends on Fe(2+) as a cofactor.

Its subcellular location is the cytoplasm. The catalysed reaction is L-threonylcarbamoyladenylate + adenosine(37) in tRNA = N(6)-L-threonylcarbamoyladenosine(37) in tRNA + AMP + H(+). Functionally, required for the formation of a threonylcarbamoyl group on adenosine at position 37 (t(6)A37) in tRNAs that read codons beginning with adenine. Is probably involved in the transfer of the threonylcarbamoyl moiety of threonylcarbamoyl-AMP (TC-AMP) to the N6 group of A37. The sequence is that of tRNA N6-adenosine threonylcarbamoyltransferase from Saccharolobus islandicus (strain M.16.27) (Sulfolobus islandicus).